The sequence spans 540 residues: Chaperonin GroEL 3 (540 aa).

ATP is bound by residues 30–33 (TLGP), Lys51, 87–91 (DGTTT), Gly415, 479–481 (NAA), and Asp495.

This sequence belongs to the chaperonin (HSP60) family. In terms of assembly, forms a cylinder of 14 subunits composed of two heptameric rings stacked back-to-back. Interacts with the co-chaperonin GroES.

It is found in the cytoplasm. It catalyses the reaction ATP + H2O + a folded polypeptide = ADP + phosphate + an unfolded polypeptide.. Its function is as follows. Together with its co-chaperonin GroES, plays an essential role in assisting protein folding. The GroEL-GroES system forms a nano-cage that allows encapsulation of the non-native substrate proteins and provides a physical environment optimized to promote and accelerate protein folding. The chain is Chaperonin GroEL 3 from Burkholderia cenocepacia (strain HI2424).